The primary structure comprises 225 residues: Urease accessory protein UreE (225 aa).

A compositionally biased stretch (basic and acidic residues) spans 171 to 215; the sequence is HHGHEHSHDHEHGHSHAAHEHSHGHDHTHGHDHDHGDHVHDESCG. The tract at residues 171-225 is disordered; it reads HHGHEHSHDHEHGHSHAAHEHSHGHDHTHGHDHDHGDHVHDESCGHGHHHHHAHR. The span at 216 to 225 shows a compositional bias: basic residues; sequence HGHHHHHAHR.

The protein belongs to the UreE family.

Its subcellular location is the cytoplasm. Involved in urease metallocenter assembly. Binds nickel. Probably functions as a nickel donor during metallocenter assembly. In Paraburkholderia xenovorans (strain LB400), this protein is Urease accessory protein UreE.